A 316-amino-acid polypeptide reads, in one-letter code: uncharacterized protein (316 aa).

Thr126 contributes to the substrate binding site. Tyr149 (proton acceptor) is an active-site residue.

The protein belongs to the NAD(P)-dependent epimerase/dehydratase family.

This is an uncharacterized protein from Bacillus subtilis (strain 168).